Reading from the N-terminus, the 378-residue chain is MARRYDELRHYPGITEHTTALASFSEAAPSVPRAPGPYTPHRPPQLQAPGLDSDSLKREKDDIYGHPLFPLLALVFEKCELATCSPRDGASAGLGSPPGGDVCSSDSFNEDIAAFAKQIRSERPLFSSNPELDNLMVQAIQVLRFHLLELEKVHDLCDNFCHRYITCLKGKMPIDLVIEDRDGSCREDLEDYAASCPSLPDQNTTWIRDHEDSGSVHLGTPGPSSGGLASQSGDNSSDQGDGLDTSVASPSSAGEDEDLDLERRRNKKRGIFPKVATNIMRAWLFQHLSHPYPSEEQKKQLAQDTGLTILQVNNWFINARRRIVQPMIDQSNRTGQGASFNPEGQPMAGFTETQPQVTVRTPGSMGMNLNLEGEWHYL.

Residues 24–57 (FSEAAPSVPRAPGPYTPHRPPQLQAPGLDSDSLK) form a disordered region. Over residues 32–43 (PRAPGPYTPHRP) the composition is skewed to pro residues. One can recognise an MEIS N-terminal domain in the interval 99–182 (GGDVCSSDSF…PIDLVIEDRD (84 aa)). The disordered stretch occupies residues 203–265 (NTTWIRDHED…DEDLDLERRR (63 aa)). Residues 230-244 (SQSGDNSSDQGDGLD) show a composition bias toward low complexity. The homeobox; TALE-type DNA-binding region spans 265–327 (RNKKRGIFPK…NARRRIVQPM (63 aa)).

It belongs to the TALE/MEIS homeobox family. Expressed at high levels in the brain. Significant expression also observed in the heart, spleen and lung. Expressed in pancreatic islets (beta-cells and non-beta-cells).

It is found in the nucleus. In terms of biological role, transcriptional regulator which directly modulates PDPK1 expression, thus promoting survival of pancreatic beta-cells. Also regulates expression of NDFIP1, BNIP3, and CCNG1. In Mus musculus (Mouse), this protein is Homeobox protein Meis3 (Meis3).